Consider the following 51-residue polypeptide: Small, acid-soluble spore protein K (51 aa).

The interval 1–51 (MRNKAKGFPNPISFNGNKANNADEHASKRPDGTTRDRPQERMRSSNHFNSL) is disordered. The segment covering 21–43 (NADEHASKRPDGTTRDRPQERMR) has biased composition (basic and acidic residues).

The protein belongs to the SspK family.

It localises to the spore core. In Shouchella clausii (strain KSM-K16) (Alkalihalobacillus clausii), this protein is Small, acid-soluble spore protein K.